Consider the following 460-residue polypeptide: Putative glycoside/cation symporter YagG (460 aa).

At 1–9 (MTQLTMKDK) the chain is on the cytoplasmic side. 2 helical membrane-spanning segments follow: residues 10–30 (IGYGLGDTACGFVWQATMFLL) and 31–51 (AYFYTDVFGLSAGIMGTLFLV). Topologically, residues 52–78 (SRVLDAVTDPLMGLLVDRTRTRHGQFR) are cytoplasmic. A helical transmembrane segment spans residues 79-99 (PFLLWGAIPFGIVCVLTFYTP). Residues 100-106 (DFSAQGK) lie on the Periplasmic side of the membrane. Residues 107-127 (IIYACVTYILLTLVYTFVNVP) traverse the membrane as a helical segment. Over 128–150 (YCAMPGVITADPKERHALQSWRF) the chain is Cytoplasmic. Residues 151 to 171 (FLAAAGSLAISGIALPLVSII) form a helical membrane-spanning segment. Residues 172–179 (GKGDEQVG) are Periplasmic-facing. A helical membrane pass occupies residues 180 to 200 (YFGAMCVLGLSGVVLLYVCFF). Over 201-262 (TTKERYTFEV…FVKYVMDHPE (62 aa)) the chain is Cytoplasmic. Residues 263–283 (LATQFLLYGSLATMFGSLCSS) traverse the membrane as a helical segment. The Periplasmic portion of the chain corresponds to 284 to 308 (RLLGRFDRVTAFKWIIVAYSLISLL). The helical transmembrane segment at 309–329 (IFVTPAEHIALIFALNILFLF) threads the bilayer. Residues 330–366 (VFNTTTPLQWLMASDVVDYEESRSGRRLDGLVFSTYL) are Cytoplasmic-facing. Residues 367–387 (FSLKIGLAIGGAVVGWILAYV) traverse the membrane as a helical segment. Residues 388 to 405 (NYSASSSVQPVEVLTTIK) lie on the Periplasmic side of the membrane. Residues 406–426 (ILFCVVPVVLYAGMFIMLSLY) form a helical membrane-spanning segment. The Cytoplasmic segment spans residues 427–460 (KLTDARVEAISRQLIKHRAAQGEAVPDAATAASH).

It belongs to the sodium:galactoside symporter (TC 2.A.2) family.

The protein localises to the cell inner membrane. The sequence is that of Putative glycoside/cation symporter YagG (yagG) from Escherichia coli (strain K12).